Reading from the N-terminus, the 24-residue chain is Ascaphin-3 (24 aa).

As to expression, expressed by the skin glands.

The protein resides in the secreted. Functionally, antimicrobial peptide that shows higher potency against Gram-negative bacteria than against Gram-positive bacteria. Has a very week hemolytic activity. In Ascaphus truei (Coastal tailed frog), this protein is Ascaphin-3.